A 2471-amino-acid polypeptide reads, in one-letter code: Histidine protein kinase 1 (2471 aa).

Residues 1 to 10 show a composition bias toward polar residues; that stretch reads MSMNFFNSSE. Disordered regions lie at residues 1–30, 52–75, and 395–415; these read MSMNFFNSSEPARDHKPDQEKETVMTTEHY, ETKKGPNLHISDLSPLESQSVPPS, and RQGSYSSNESRRKSSSGFNIG. Over residues 11-30 the composition is skewed to basic and acidic residues; that stretch reads PARDHKPDQEKETVMTTEHY. The Protein kinase domain maps to 358–636; sequence EHPSQSTDQK…DCHSLLHDLI (279 aa). The 222-residue stretch at 2004–2225 folds into the Histidine kinase domain; the sequence is NMSHEIRTPF…TFYVSVIMDA (222 aa). Histidine 2007 is subject to Phosphohistidine; by autocatalysis. One can recognise a Response regulatory domain in the interval 2340-2466; it reads RILLAEDNLL…ELRRILTKVG (127 aa). At aspartate 2394 the chain carries 4-aspartylphosphate.

In terms of processing, the phosphorelay mechanism involves the sequential transfer of a phosphate group from His-2007 (H1) in the histidine kinase domain (transmitter domain) to Asp-2394 (D1) of the response regulatory domain (receiver domain). This transfer probably occurs between two CHK1 molecules, rather than intramolecularly.

The enzyme catalyses ATP + protein L-histidine = ADP + protein N-phospho-L-histidine.. Functionally, histidine kinase involved in a two-component signaling pathway that regulates cell wall mannan and glucan biosynthesis. Regulates quorum sensing as well as hyphal formation, biofilm formation, chlamidospore formation, and virulence. Plays a prominent role in phagocyte activation. Involved in the covering of the most potent pro-inflammatory cell wall molecules, the beta-glucans, underneath a dense mannan layer, so that the pathogen becomes partly invisible for immune cells such as phagocytes. The chain is Histidine protein kinase 1 (CHK1) from Candida albicans (strain SC5314 / ATCC MYA-2876) (Yeast).